A 62-amino-acid chain; its full sequence is uncharacterized protein (62 aa).

The interval 38 to 62 is disordered; that stretch reads VKSESDTADSKRSAEAKADEAPAKM.

This is an uncharacterized protein from Schizosaccharomyces pombe (strain 972 / ATCC 24843) (Fission yeast).